A 740-amino-acid chain; its full sequence is NAD(P)H-quinone oxidoreductase subunit 5, chloroplastic (740 aa).

The next 16 membrane-spanning stretches (helical) occupy residues Trp9–Phe29, Trp40–Ile60, Ile89–Ile109, Phe125–Ile145, Ile147–Thr167, Gly185–Phe205, Val221–Ser241, Thr258–Ala278, Leu283–Leu303, Leu327–Ile347, Ala354–Ser374, Thr396–Ser416, Leu425–Tyr445, Ile547–Pro567, Phe606–Tyr626, and Ile718–Ile738.

The protein belongs to the complex I subunit 5 family. NDH is composed of at least 16 different subunits, 5 of which are encoded in the nucleus.

Its subcellular location is the plastid. The protein localises to the chloroplast thylakoid membrane. The enzyme catalyses a plastoquinone + NADH + (n+1) H(+)(in) = a plastoquinol + NAD(+) + n H(+)(out). The catalysed reaction is a plastoquinone + NADPH + (n+1) H(+)(in) = a plastoquinol + NADP(+) + n H(+)(out). In terms of biological role, NDH shuttles electrons from NAD(P)H:plastoquinone, via FMN and iron-sulfur (Fe-S) centers, to quinones in the photosynthetic chain and possibly in a chloroplast respiratory chain. The immediate electron acceptor for the enzyme in this species is believed to be plastoquinone. Couples the redox reaction to proton translocation, and thus conserves the redox energy in a proton gradient. The protein is NAD(P)H-quinone oxidoreductase subunit 5, chloroplastic (ndhF) of Aethionema cordifolium (Lebanon stonecress).